The following is a 606-amino-acid chain: Probable potassium transport system protein Kup (606 aa).

Transmembrane regions (helical) follow at residues 18–38 (GLVF…VFAL), 46–66 (VFGI…AEYA), 97–117 (LTFV…DGVI), 138–158 (GLHQ…LFVF), 166–186 (VAGA…LSGA), 212–232 (GLAG…GEAL), 247–267 (AWYI…AFII), 287–307 (LYIP…QAMI), 339–359 (IYIG…MLVF), 368–388 (AYGL…ILIL), 395–415 (WKAV…TACL), and 418–438 (LPHG…TILV).

Belongs to the HAK/KUP transporter (TC 2.A.72) family.

The protein resides in the cell inner membrane. It carries out the reaction K(+)(in) + H(+)(in) = K(+)(out) + H(+)(out). In terms of biological role, transport of potassium into the cell. Likely operates as a K(+):H(+) symporter. The sequence is that of Probable potassium transport system protein Kup from Trichlorobacter lovleyi (strain ATCC BAA-1151 / DSM 17278 / SZ) (Geobacter lovleyi).